The sequence spans 407 residues: MGSDVRDMNLLPPVSSLSGNSSCNMPVSNSSQWAPVLDFPPGAPYSSLTPHSFIKQEPTWNPDPHEDQCLSAFTVHFSGQFTGTAGACRYGPFGAPTPSQATTGQARMFPNAPYLSNCLDNQQSMRNQGYSAVAFDGTPSYGHTPSHHTAQFTNHSFKHEDPISQQTSLGEQQYSVPPPVYGCHTPTDTCTGSQALLLRTPYNSDNLYQMECMTWNQMNLGSSLKSHGTTYENDSHSAPMLYSCGGQYRIHTHGVFRGIQDVRRVPGVTPAIVRSTEANEKRPFMCAYPGCNKRYFKLSHLQMHSRKHTGEKPYQCDFKDCERRFSRSDQLKRHQRRHTGVKPFQCKTCQRKFSRSDHLKTHTRTHTGEKPFSCRWPSCQKKFARSDELVRHHNMHQRNMTKLQLAL.

Residues Lys-55 and Lys-158 each participate in a glycyl lysine isopeptide (Lys-Gly) (interchain with G-Cter in SUMO) cross-link. Positions Met-213–Gly-221 match the 9aaTAD motif. C2H2-type zinc fingers lie at residues Phe-284–His-308, Tyr-314–His-338, Phe-344–His-366, and Phe-372–His-396. 2 important for interaction with target DNA regions span residues Ser-328–Lys-342 and Ser-354–His-362.

The protein belongs to the EGR C2H2-type zinc-finger protein family. As to expression, expressed in the pronephric anlage from stage 23 to 30. Also expressed in the adult kidney (mesonephros) and in testis.

It localises to the nucleus. The protein localises to the cytoplasm. Its subcellular location is the nucleus speckle. Functionally, transcription factor required for development of the vascular component of the pronephric kidney, the glomus; may repress tubule-specific gene expression in the portion of the pronephros fated to form the glomus. Recognizes and binds to the DNA sequence 5'-GCG(T/G)GGGCG-3'. Inhibits Wnt-signaling during embryonic development. This is Wilms tumor protein homolog B (wt1-b) from Xenopus laevis (African clawed frog).